We begin with the raw amino-acid sequence, 739 residues long: NAD(P)H-quinone oxidoreductase subunit 5, chloroplastic (739 aa).

A run of 15 helical transmembrane segments spans residues 9 to 29 (WVIPFVPLPVTMSIGLGLLLV), 40 to 60 (WAFPSVLLLSITMVFSSNLSI), 89 to 109 (IDPLTSIMSILITTVGIVVLI), 144 to 164 (LIQIHIFWELVGMCSYLLIGF), 184 to 204 (IGDFGLLLGILGLYWITGSFE), 219 to 239 (NGVHFVFATLCASLLFVGAVA), 258 to 278 (TPISALIHAATMVAAGIFLVA), 280 to 300 (LLPIFTVIPYIMNLIALIGVI), 327 to 347 (LGYTMLALGIGSYRAALFHLI), 354 to 374 (ALLFLGSGSIIHSMEPIVGYS), 396 to 416 (TTFLLGTFSLCGIPPLACFWS), 425 to 445 (WLYSPIFAIIAYSTAGLTAFY), 542 to 562 (TMLFPLLVLVLFTLFVGSIGI), 597 to 617 (FFINAIFSVSISYFGILIAFL), and 719 to 739 (LFLYLFYIIIIIFLLIFWSLI).

The protein belongs to the complex I subunit 5 family. As to quaternary structure, NDH is composed of at least 16 different subunits, 5 of which are encoded in the nucleus.

It is found in the plastid. The protein resides in the chloroplast thylakoid membrane. The catalysed reaction is a plastoquinone + NADH + (n+1) H(+)(in) = a plastoquinol + NAD(+) + n H(+)(out). The enzyme catalyses a plastoquinone + NADPH + (n+1) H(+)(in) = a plastoquinol + NADP(+) + n H(+)(out). Functionally, NDH shuttles electrons from NAD(P)H:plastoquinone, via FMN and iron-sulfur (Fe-S) centers, to quinones in the photosynthetic chain and possibly in a chloroplast respiratory chain. The immediate electron acceptor for the enzyme in this species is believed to be plastoquinone. Couples the redox reaction to proton translocation, and thus conserves the redox energy in a proton gradient. The chain is NAD(P)H-quinone oxidoreductase subunit 5, chloroplastic (ndhF) from Chloranthus spicatus (Chulantree).